Here is a 202-residue protein sequence, read N- to C-terminus: N-acetyltransferase 9-like protein (202 aa).

An N-acetyltransferase domain is found at 34–184 (EEIRRLTGSE…FTFELPKNRL (151 aa)).

Belongs to the acetyltransferase family. GNAT subfamily.

The chain is N-acetyltransferase 9-like protein from Caenorhabditis elegans.